A 260-amino-acid polypeptide reads, in one-letter code: LIM and SH3 domain protein 1 (260 aa).

At Met1 the chain carries N-acetylmethionine. Residues 5–56 enclose the LIM zinc-binding domain; sequence CARCCKIVYPTEKVNCLDKFWHKACFHCETCKMTLNMKNYKGYEKKPYCNAH. Residue Lys42 is modified to N6-acetyllysine. Nebulin repeat units lie at residues 61–95 and 97–131; these read SFTMVADTPENLRLKQQSELQSQVRYKEEFEKNKG and GFSVVADTPELQRIKKTQDQISNIKYHEEFEKSRM. Position 68 is a phosphothreonine (Thr68). Lys75 bears the N6-methyllysine mark. Ser99 carries the phosphoserine modification. Residue Thr104 is modified to Phosphothreonine. Lys112 bears the N6-succinyllysine mark. 2 positions are modified to phosphoserine: Ser118 and Ser134. Positions 123-204 are disordered; sequence HEEFEKSRMG…QRSAPGGGGK (82 aa). Residues 140–155 show a composition bias toward basic and acidic residues; sequence ECERRDPQESSYRRPQ. A compositionally biased stretch (low complexity) spans 171–180; that stretch reads QQPQQQPAAQ. Residues 201–260 enclose the SH3 domain; sequence GGGKRYRAVYDYSAADEDEVSFQDGDTIVNVQQIDDGWMYGTVERTGDTGMLPANYVEAI.

Interacts with F-actin. Interacts with ANKRD54. Interacts with KBTBD10. Phosphorylated.

Its subcellular location is the cytoplasm. It localises to the cell cortex. The protein resides in the cytoskeleton. Its function is as follows. Plays an important role in the regulation of dynamic actin-based, cytoskeletal activities. Agonist-dependent changes in LASP1 phosphorylation may also serve to regulate actin-associated ion transport activities, not only in the parietal cell but also in certain other F-actin-rich secretory epithelial cell types. The polypeptide is LIM and SH3 domain protein 1 (LASP1) (Bos taurus (Bovine)).